The following is a 162-amino-acid chain: 2-C-methyl-D-erythritol 2,4-cyclodiphosphate synthase (162 aa).

Positions 9 and 11 each coordinate a divalent metal cation. 4-CDP-2-C-methyl-D-erythritol 2-phosphate contacts are provided by residues Asp-9–His-11 and His-35–Ser-36. An a divalent metal cation-binding site is contributed by His-43. Residues Asp-57–Gly-59, Phe-62–Asp-66, Thr-133–Glu-136, Phe-140, and Arg-143 each bind 4-CDP-2-C-methyl-D-erythritol 2-phosphate.

This sequence belongs to the IspF family. Homotrimer. Requires a divalent metal cation as cofactor.

It catalyses the reaction 4-CDP-2-C-methyl-D-erythritol 2-phosphate = 2-C-methyl-D-erythritol 2,4-cyclic diphosphate + CMP. The protein operates within isoprenoid biosynthesis; isopentenyl diphosphate biosynthesis via DXP pathway; isopentenyl diphosphate from 1-deoxy-D-xylulose 5-phosphate: step 4/6. Involved in the biosynthesis of isopentenyl diphosphate (IPP) and dimethylallyl diphosphate (DMAPP), two major building blocks of isoprenoid compounds. Catalyzes the conversion of 4-diphosphocytidyl-2-C-methyl-D-erythritol 2-phosphate (CDP-ME2P) to 2-C-methyl-D-erythritol 2,4-cyclodiphosphate (ME-CPP) with a corresponding release of cytidine 5-monophosphate (CMP). This chain is 2-C-methyl-D-erythritol 2,4-cyclodiphosphate synthase, found in Histophilus somni (strain 129Pt) (Haemophilus somnus).